A 724-amino-acid chain; its full sequence is Solute carrier organic anion transporter family member 4C1 (724 aa).

At 1 to 105 the chain is on the cytoplasmic side; the sequence is MKSAKGIENL…QCLQRCNTPG (105 aa). 5 positions are modified to phosphoserine: Ser15, Ser16, Ser24, Ser26, and Ser28. A disordered region spans residues 30–71; the sequence is IEVSALSSDPQRENSQPQELQKPQEPQKSPEPSLPSAPPNVS. Residues 44–60 are compositionally biased toward low complexity; it reads SQPQELQKPQEPQKSPE. Residues 106–126 traverse the membrane as a helical segment; sequence GFLLHYCLLAVTQGIVVNGLV. Topologically, residues 127 to 145 are extracellular; sequence NISISTVEKRYEMKSSLTG. The chain crosses the membrane as a helical span at residues 146–166; it reads LISSSYDISFCLLSLFVSFFG. The Cytoplasmic portion of the chain corresponds to 167–172; that stretch reads ERGHKP. A helical membrane pass occupies residues 173-197; that stretch reads RWLAFAAFMIGLGALVFSLPQFFSG. The Extracellular portion of the chain corresponds to 198-223; that stretch reads EYKLGSLFEDTCVTTRNSTSCTSSTS. A helical transmembrane segment spans residues 224-254; that stretch reads SLSNYLYVFILGQLLLGAGGTPLYTLGTAFL. Over 255–274 the chain is Cytoplasmic; that stretch reads DDSVPTHKSSLYIGTGYAMS. Residues 275 to 295 form a helical membrane-spanning segment; sequence ILGPAIGYVLGGQLLTIYIDV. The Extracellular segment spans residues 296–311; it reads AMGESTDVTEDDPRWL. A helical transmembrane segment spans residues 312–336; the sequence is GAWWIGFLLSWIFAWSLIIPFSCFP. Residues 337–377 lie on the Cytoplasmic side of the membrane; sequence KHLPGTAEIQAGKTSQAHQSNSNADVKFGKSIKDFPAALKN. Residues 378 to 399 form a helical membrane-spanning segment; that stretch reads LMKNAVFMCLVLSTSSEALITT. Over 400–419 the chain is Extracellular; sequence GFATFLPKFIENQFGLTSSF. The chain crosses the membrane as a helical span at residues 420-443; sequence AATLGGAVLIPGAALGQILGGFLV. Residues 444-447 are Cytoplasmic-facing; sequence SKFR. The helical transmembrane segment at 448–471 threads the bilayer; sequence MTCKNTMKFALFTSGVALTLSFVF. Residues 472-580 lie on the Extracellular side of the membrane; the sequence is MYAKCENEPF…ETHCAKLPIF (109 aa). Positions 495–549 constitute a Kazal-like domain; it reads GNLIAPCNANCNCSRSYYYPVCGDGVQYFSPCFAGCSNPVAHRKPKVYYNCSCIE. Disulfide bonds link Cys501-Cys530, Cys507-Cys526, and Cys516-Cys547. Residues 581–603 form a helical membrane-spanning segment; sequence LCIFFIVIIFTFMAGTPITVSIL. Residues 604-612 are Cytoplasmic-facing; it reads RCVNHRQRS. The chain crosses the membrane as a helical span at residues 613-638; it reads LALGIQFMVLRLLGTIPGPIIFGFTI. Residues 639-672 are Extracellular-facing; sequence DSTCILWDINDCGIKGACWIYDNIKMAHMLVAIS. Residues 673 to 690 traverse the membrane as a helical segment; it reads VTCKVITMFFNGFAIFLY. At 691 to 724 the chain is on the cytoplasmic side; sequence KPPPSATDVSFHKENAVVTNVLAEQDLNKIVKEG.

It belongs to the organo anion transporter (TC 2.A.60) family. In terms of tissue distribution, predominantly expressed in kidney but also weakly expressed in both fetal liver and kidney.

It localises to the basolateral cell membrane. It catalyses the reaction estrone 3-sulfate(out) = estrone 3-sulfate(in). The catalysed reaction is L-thyroxine(out) = L-thyroxine(in). It carries out the reaction 3,3',5-triiodo-L-thyronine(out) = 3,3',5-triiodo-L-thyronine(in). The enzyme catalyses chenodeoxycholate(out) = chenodeoxycholate(in). It catalyses the reaction glycocholate(out) = glycocholate(in). The catalysed reaction is L-homoarginine(in) = L-homoarginine(out). It carries out the reaction L-arginine(in) = L-arginine(out). The enzyme catalyses N(omega),N(omega)-dimethyl-L-arginine(out) = N(omega),N(omega)-dimethyl-L-arginine(in). Its function is as follows. Mediates the transport of organic anions such as steroids (estrone 3-sulfate, chenodeoxycholate, glycocholate) and thyroid hormones (3,3',5-triiodo-L-thyronine (T3), L-thyroxine (T4)), in the kidney. Capable of transporting cAMP and pharmacological substances such as digoxin, ouabain and methotrexate. Transport is independent of sodium, chloride ion, and ATP. Transport activity is stimulated by an acidic extracellular environment due to increased substrate affinity to the transporter. The driving force for this transport activity is currently not known. The role of hydrogencarbonate (HCO3(-), bicarbonate) as the probable counteranion that exchanges for organic anions is still not well defined. Functions as an uptake transporter at the apical membrane, suggesting a role in renal reabsorption. Involved in the renal secretion of the uremic toxin ADMA (N(omega),N(omega)-dimethyl-L-arginine or asymmetrical dimethylarginine), which is associated to cardiovascular events and mortality, and the structurally related amino acids L-arginine and L-homoarginine (a cardioprotective biomarker). Can act bidirectionally, suggesting a dual protective role of this transport protein; exporting L-homoarginine after being synthesized in proximal tubule cells, and mediating uptake of ADMA from the blood into proximal tubule cells where it is degraded by the enzyme dimethylarginine dimethylaminohydrolase 1 (DDAH1). May be involved in sperm maturation by enabling directed movement of organic anions and compounds within or between cells. This ion-transporting process is important to maintain the strict epididymal homeostasis necessary for sperm maturation. May have a role in secretory functions since seminal vesicle epithelial cells are assumed to secrete proteins involved in decapacitation by modifying surface proteins to facilitate the acquisition of the ability to fertilize the egg. The polypeptide is Solute carrier organic anion transporter family member 4C1 (Homo sapiens (Human)).